The chain runs to 879 residues: MLLRLLLLLAPCGAGFATKVVSISLRGNWKIHSGNGSLQLPATVPGCVHSALFNKRIIKDPYYRFNNLDYRWIALDNWTYIKKFKLHSDMSTWSKVNLVFEGIDTVAVVLLNSVPIGKTDNMFRRYSFDITHTVKAVNIIEVRFQSPVVYANQRSERHTAYWVPPNCPPPVQDGECHVNFIRKMQCSFGWDWGPSFPTQGIWKDVRIEAYNVCHLNYFMFTPIYDNYMKTWNLKIESSFDVVSSKLVSGEAIVAIPELNIQQTNNIELQHGERTVELFVKIDKAIIVETWWPHGHGNQTGYNMSVIFELDGGLRFEKSAKVYFRTVELVEEPIQNSPGLSFYFKINGLPIFLKGSNWIPADSFQDRVTSAMLRLLLQSVVDANMNALRVWGGGVYEQDEFYELCDELGIMIWQDFMFACALYPTDKDFMDSVREEVTHQVRRLKSHPSIITWSGNNENEAALMMGWYDTKPGYLQTYIKDYVTLYVKNIRTIVLEGDQTRPFITSSPTNGAKTIAEGWLSPNPYDLNYGDVHFYDYVSDCWNWRTFPKARFVSEYGYQSWPSFSTLEKVSSEEDWSYRSSFALHRQHLINGNNEMLHQIELHFKLPNSTDQLRRFKDTLYLTQVMQAQCVKTETEFYRRSRSEIVNGKGHTMGALYWQLNDIWQAPSWSSLEYGGKWKMLHYFARHFFAPLLPVGFEDKDMLFIYGASHLHSDQQMMLTVRVHTWSSLELVCSESTNPFVIKAGESVLLYTKPVPELLKGCPGCTRQSCVVSFYLSTDGELLSPINYHFLSSLKNAKGLHKANITATISQQGDTFVFDLKTSAVAPFVWLDVGSIPGRFSDNGFLMTEKTRTVFFYPWKPTSKSELEQSFHVTSLADTY.

An N-terminal signal peptide occupies residues 1-17 (MLLRLLLLLAPCGAGFA). Residues N35 and N77 are each glycosylated (N-linked (GlcNAc...) asparagine). A disulfide bridge connects residues C167 and C176. 190 to 192 (WDW) is a binding site for substrate. N297 and N302 each carry an N-linked (GlcNAc...) asparagine glycan. Position 456 (N456) interacts with substrate. E457 acts as the Proton donor in catalysis. Cystine bridges form between C540–C629, C732–C761, and C764–C769. The Nucleophile role is filled by E554. A glycan (N-linked (GlcNAc...) asparagine) is linked at N607. N803 is a glycosylation site (N-linked (GlcNAc...) asparagine).

The protein belongs to the glycosyl hydrolase 2 family. Monomer. In terms of processing, the N-terminus is blocked. N-glycosylated. As to expression, detected in kidney (at protein level). Highest expression is found in thyroid tissue. The amount of transcript is significantly higher in normal tissues than in tissues affected by the disease.

Its subcellular location is the lysosome. The catalysed reaction is Hydrolysis of terminal, non-reducing beta-D-mannose residues in beta-D-mannosides.. Its pathway is glycan metabolism; N-glycan degradation. Exoglycosidase that cleaves the single beta-linked mannose residue from the non-reducing end of all N-linked glycoprotein oligosaccharides. The sequence is that of Beta-mannosidase (MANBA) from Bos taurus (Bovine).